The primary structure comprises 350 residues: Phosphotriesterase-related protein (350 aa).

Positions 22, 24, 169, 201, 230, and 298 each coordinate a divalent metal cation.

This sequence belongs to the metallo-dependent hydrolases superfamily. Phosphotriesterase family. A divalent metal cation is required as a cofactor.

The sequence is that of Phosphotriesterase-related protein from Drosophila pseudoobscura pseudoobscura (Fruit fly).